We begin with the raw amino-acid sequence, 344 residues long: Ferrochelatase (344 aa).

Positions 214 and 295 each coordinate Fe cation.

This sequence belongs to the ferrochelatase family.

It localises to the cytoplasm. It catalyses the reaction heme b + 2 H(+) = protoporphyrin IX + Fe(2+). It functions in the pathway porphyrin-containing compound metabolism; protoheme biosynthesis; protoheme from protoporphyrin-IX: step 1/1. Its function is as follows. Catalyzes the ferrous insertion into protoporphyrin IX. The protein is Ferrochelatase of Rhizobium leguminosarum bv. trifolii (strain WSM2304).